Consider the following 116-residue polypeptide: CDKN2AIP N-terminal-like protein (116 aa).

An N-acetylmethionine modification is found at Met1. Residues 24–116 (AEQFRSYSES…RSELMKKHQS (93 aa)) enclose the XRN2-binding (XTBD) domain.

It belongs to the CARF family. In terms of assembly, interacts with XRN2; the interaction is direct.

The sequence is that of CDKN2AIP N-terminal-like protein (CDKN2AIPNL) from Bos taurus (Bovine).